The following is a 163-amino-acid chain: GYLGGIAAPVGYAAPAVGYAAPAIAAAPVAVAHAVAPAAASVANTYRISQTARVLAAPAAYAAPAVAAAPAIGYAAPAIAAAPALGYARYAAAAPVAVAHAAVPAAASVANTYRISQTARLLAAPAVAHAPVAYAAPAAYAAPAIGYGYGGLAYGAAPVAKVY.

14 tandem repeats follow at residues 7 to 10 (AAPV), 13 to 16 (AAPA), 20 to 23 (AAPA), 26 to 29 (AAPV), 56 to 59 (AAPA), 62 to 65 (AAPA), 68 to 71 (AAPA), 75 to 78 (AAPA), 81 to 84 (AAPA), 93 to 96 (AAPV), 123 to 126 (AAPA), 135 to 138 (AAPA), 141 to 144 (AAPA), and 156 to 159 (AAPV).

Its function is as follows. Component of the cuticle of migratory locust which contains more than 100 different structural proteins. This Locusta migratoria (Migratory locust) protein is Cuticle protein 38.